Reading from the N-terminus, the 179-residue chain is MAEPELEELAELVRRLSVVHGRVTLSSGKEADYYVDLRRATLHHRASALIGRLMRELTSDWDYAVVGGLTLGADPVATAIMHAPGRPIDAFVVRKSAKTHGLQRLIEGSEVAGKRVLVVEDTSTTGNSALTAVRAVQQAGGQVLGVATVVDRATGAAEAIEAEGLPYRSVLGLADLGLG.

5-phospho-alpha-D-ribose 1-diphosphate contacts are provided by residues Arg-94, Lys-95, Lys-98, His-100, and 120-128; that span reads EDTSTTGNS. Positions 124 and 152 each coordinate orotate.

It belongs to the purine/pyrimidine phosphoribosyltransferase family. PyrE subfamily. Homodimer. The cofactor is Mg(2+).

The catalysed reaction is orotidine 5'-phosphate + diphosphate = orotate + 5-phospho-alpha-D-ribose 1-diphosphate. Its pathway is pyrimidine metabolism; UMP biosynthesis via de novo pathway; UMP from orotate: step 1/2. Functionally, catalyzes the transfer of a ribosyl phosphate group from 5-phosphoribose 1-diphosphate to orotate, leading to the formation of orotidine monophosphate (OMP). This is Orotate phosphoribosyltransferase from Mycobacterium avium (strain 104).